We begin with the raw amino-acid sequence, 388 residues long: MKWLLLLGLVALSECIIYKVPLVRKKSLRRNLSEHGLLKDFLKKHNRNPASKYFPQTEAPTLIDEQPLENYLDVEYFGTIGIGTPAQDFTVIFDTGSSNLWVPSVYCSSLACTNHNLFNPQDSSTYQSTSGTLSITYGTGSMTGILGYDTVQVGGISDTNQIFGLSETEPGSFLYYAPFDGILGLAYPSISSSGATPVFDNIWDQGLVSQDLFSVYLSADDQSGSVVIFGGIDSSYYTGSLNWVPVSVEGYWQISVDSITMNGEAIACAEGCQAIVDTGTSLLTGPTSPIANIQSDIGASENSDGEMVVSCSAISSLPDIVFTINGVQYPLPPSAYILQSQGSCTSGFQGMDVPTESGELWILGDVFIRQYFTVFDRANNQVGLAPVA.

The first 15 residues, 1–15 (MKWLLLLGLVALSEC), serve as a signal peptide directing secretion. A propeptide spans 16-62 (IIYKVPLVRKKSLRRNLSEHGLLKDFLKKHNRNPASKYFPQTEAPTL) (activation peptide). The Peptidase A1 domain maps to 76-385 (YFGTIGIGTP…DRANNQVGLA (310 aa)). The active site involves D94. C107 and C112 form a disulfide bridge. A Phosphoserine modification is found at S130. A disulfide bridge connects residues C268 and C272. D277 is a catalytic residue. C311 and C344 are disulfide-bonded.

The protein belongs to the peptidase A1 family.

Its subcellular location is the secreted. It catalyses the reaction Preferential cleavage: hydrophobic, preferably aromatic, residues in P1 and P1' positions. Cleaves 1-Phe-|-Val-2, 4-Gln-|-His-5, 13-Glu-|-Ala-14, 14-Ala-|-Leu-15, 15-Leu-|-Tyr-16, 16-Tyr-|-Leu-17, 23-Gly-|-Phe-24, 24-Phe-|-Phe-25 and 25-Phe-|-Tyr-26 bonds in the B chain of insulin.. Functionally, shows particularly broad specificity; although bonds involving phenylalanine and leucine are preferred, many others are also cleaved to some extent. The protein is Pepsin A (PGA) of Macaca mulatta (Rhesus macaque).